The primary structure comprises 513 residues: EGF-like domain-containing protein 1 (513 aa).

The first 21 residues, 1–21, serve as a signal peptide directing secretion; it reads MMHTFLRRLCVVALCLGYIKA. Residues 72 to 108 form the EGF-like domain; the sequence is PTALCGPPCLNGGECYEPTVGTYMCMCPEAFYGNKCE. Cystine bridges form between Cys-76–Cys-86, Cys-80–Cys-96, and Cys-98–Cys-107. The ZP domain occupies 115 to 364; the sequence is ECSGTEITIN…TSCDSVVCPS (250 aa). Positions 356 to 411 are disordered; sequence SCDSVVCPSPPQSVPSNPQNIPPANPQNIPPANPQNIPPANPQISPSSSQRKRRAA. Over residues 375-396 the composition is skewed to pro residues; the sequence is NIPPANPQNIPPANPQNIPPAN. N-linked (GlcNAc...) asparagine glycosylation is found at Asn-438 and Asn-503.

In terms of tissue distribution, component of the acid-insoluble organic matrix of calcified layers of the shell (at protein level).

Its subcellular location is the secreted. The sequence is that of EGF-like domain-containing protein 1 from Lottia gigantea (Giant owl limpet).